A 338-amino-acid chain; its full sequence is Nucleoid-associated protein VSAL_I1059 (338 aa).

The disordered stretch occupies residues 319 to 338 (KGTPPNLKDQLTRRLGSSES).

Belongs to the YejK family.

Its subcellular location is the cytoplasm. The protein resides in the nucleoid. The protein is Nucleoid-associated protein VSAL_I1059 of Aliivibrio salmonicida (strain LFI1238) (Vibrio salmonicida (strain LFI1238)).